A 539-amino-acid polypeptide reads, in one-letter code: Phenylalanine--tRNA ligase beta subunit (539 aa).

In terms of domain architecture, B5 spans 271–347; that stretch reads LSPARWTVTT…KSYGYENLKA (77 aa). 4 residues coordinate Mg(2+): Asp-325, Asp-331, Glu-334, and Asp-335.

It belongs to the phenylalanyl-tRNA synthetase beta subunit family. Type 2 subfamily. Tetramer of two alpha and two beta subunits. It depends on Mg(2+) as a cofactor.

The protein resides in the cytoplasm. The enzyme catalyses tRNA(Phe) + L-phenylalanine + ATP = L-phenylalanyl-tRNA(Phe) + AMP + diphosphate + H(+). This Methanothrix thermoacetophila (strain DSM 6194 / JCM 14653 / NBRC 101360 / PT) (Methanosaeta thermophila) protein is Phenylalanine--tRNA ligase beta subunit.